Reading from the N-terminus, the 287-residue chain is uncharacterized protein (287 aa).

GTP is bound by residues 43 to 50, 90 to 93, and 156 to 159; these read GKTGVGKS, DLPG, and DKAE. In terms of domain architecture, G spans 48-138; it reads GKSSLCNALF…LTVDEHFYHQ (91 aa).

To E.coli YfjP and YeeP.

This is an uncharacterized protein from Escherichia coli (strain K12).